Reading from the N-terminus, the 397-residue chain is Serpin B10 (397 aa).

The short motif at 74–77 is the Nuclear localization signal element; sequence KKRK.

The protein belongs to the serpin family. Ov-serpin subfamily.

The protein localises to the nucleus. It localises to the cytoplasm. Functionally, protease inhibitor that may play a role in the regulation of protease activities during hematopoiesis and apoptosis induced by TNF. May regulate protease activities in the cytoplasm and in the nucleus. The sequence is that of Serpin B10 (Serpinb10) from Mus musculus (Mouse).